The chain runs to 1006 residues: Probable beta-galactosidase A (1006 aa).

The N-terminal stretch at 1 to 18 (MKLLSVCAVALLAAQAAG) is a signal peptide. Residues Tyr-96, Asn-140, Ala-141, and Glu-142 each contribute to the substrate site. An N-linked (GlcNAc...) asparagine glycan is attached at Asn-156. Asn-199 contacts substrate. The active-site Proton donor is the Glu-200. An intrachain disulfide couples Cys-205 to Cys-206. The N-linked (GlcNAc...) asparagine glycan is linked to Asn-207. Tyr-260 contributes to the substrate binding site. Cysteines 266 and 315 form a disulfide. Glu-298 (nucleophile) is an active-site residue. A substrate-binding site is contributed by Tyr-364. Asn-373, Asn-402, Asn-422, Asn-622, Asn-777, and Asn-914 each carry an N-linked (GlcNAc...) asparagine glycan.

It belongs to the glycosyl hydrolase 35 family.

The protein resides in the secreted. The catalysed reaction is Hydrolysis of terminal non-reducing beta-D-galactose residues in beta-D-galactosides.. Functionally, cleaves beta-linked terminal galactosyl residues from gangliosides, glycoproteins, and glycosaminoglycans. This is Probable beta-galactosidase A (lacA) from Neosartorya fischeri (strain ATCC 1020 / DSM 3700 / CBS 544.65 / FGSC A1164 / JCM 1740 / NRRL 181 / WB 181) (Aspergillus fischerianus).